The sequence spans 203 residues: NAD(P)H dehydrogenase (quinone) (203 aa).

A Flavodoxin-like domain is found at 7–194 (VLVLYHSSYG…SLARKQGAHV (188 aa)). Residues 13-18 (SSYGHI) and 82-84 (TRF) contribute to the FMN site. Residue Tyr-15 coordinates NAD(+). Trp-102 provides a ligand contact to substrate. FMN is bound by residues 117–122 (STGTGG) and His-137.

This sequence belongs to the WrbA family. The cofactor is FMN.

The enzyme catalyses a quinone + NADH + H(+) = a quinol + NAD(+). It catalyses the reaction a quinone + NADPH + H(+) = a quinol + NADP(+). The sequence is that of NAD(P)H dehydrogenase (quinone) from Parvibaculum lavamentivorans (strain DS-1 / DSM 13023 / NCIMB 13966).